The sequence spans 420 residues: Carbohydrate sulfotransferase 12 (420 aa).

The Cytoplasmic portion of the chain corresponds to 1–5 (MAKSR). The helical; Signal-anchor for type II membrane protein transmembrane segment at 6 to 26 (LFCLLVALGSVFMILFIIVYW) threads the bilayer. Residues 27–420 (DNVGTANLNL…YPKPDDLLSV (394 aa)) are Lumenal-facing. N-linked (GlcNAc...) asparagine glycosylation is found at Asn76 and Asn139. A 3'-phosphoadenylyl sulfate-binding site is contributed by 176–182 (PKVACTN). Asn215 carries an N-linked (GlcNAc...) asparagine glycan. 251 to 259 (RDPFVRLIS) provides a ligand contact to 3'-phosphoadenylyl sulfate. Asn286 and Asn376 each carry an N-linked (GlcNAc...) asparagine glycan.

This sequence belongs to the sulfotransferase 2 family.

The protein resides in the golgi apparatus membrane. It catalyses the reaction chondroitin beta-D-glucuronate + n 3'-phosphoadenylyl sulfate = chondroitin 4'-sulfate + n adenosine 3',5'-bisphosphate + n H(+). Catalyzes the transfer of sulfate to position 4 of the N-acetylgalactosamine (GalNAc) residue of chondroitin and desulfated dermatan sulfate. Chondroitin sulfate constitutes the predominant proteoglycan present in cartilage and is distributed on the surfaces of many cells and extracellular matrices. The sequence is that of Carbohydrate sulfotransferase 12 (chst12) from Xenopus laevis (African clawed frog).